The chain runs to 130 residues: Small ribosomal subunit protein uS9 (130 aa).

Positions 108 to 130 (SREKERKKYGQRGARARFQYSKR) are disordered.

It belongs to the universal ribosomal protein uS9 family.

The protein is Small ribosomal subunit protein uS9 of Solidesulfovibrio magneticus (strain ATCC 700980 / DSM 13731 / RS-1) (Desulfovibrio magneticus).